The sequence spans 187 residues: Elongation factor P (187 aa).

It belongs to the elongation factor P family.

The protein resides in the cytoplasm. Its pathway is protein biosynthesis; polypeptide chain elongation. Involved in peptide bond synthesis. Stimulates efficient translation and peptide-bond synthesis on native or reconstituted 70S ribosomes in vitro. Probably functions indirectly by altering the affinity of the ribosome for aminoacyl-tRNA, thus increasing their reactivity as acceptors for peptidyl transferase. This chain is Elongation factor P, found in Parvibaculum lavamentivorans (strain DS-1 / DSM 13023 / NCIMB 13966).